The primary structure comprises 363 residues: MIETFYEVMRRQGISRRSFLKYCSLTATSLGLSPVFVPKIVHAMETKPRTPVLWLHGLECTCCSESFIRSAHPLAKDVVLSMISLDYDDTLMAAAGHQAEAILGEVMTKYKGNYILAVEGNPPLNQDGMSCIIGGKPFIDQLRHVAKDAKAIISWGSCASWGCVQAAKANPTQATPIHKVITDKPIIKVPGCPPIAEVMTGVITYMLTFDRFPELDRQGRPKMFYSQRIHDKCYRRPHFDAGQFVESWDDESARKGYCLYKVGCKGPTTYNACSTTRWNGGTSFPIQSGHGCIGCSEDGFWDKGSFYSRLTNIHQFGIEANADSVGVTAVGVVGAATAAHAAVSAIKRARHKDAAQDTAATQK.

The tat-type signal signal peptide spans 1-43 (MIETFYEVMRRQGISRRSFLKYCSLTATSLGLSPVFVPKIVHA). The [4Fe-4S] cluster site is built by C60, C63, C158, C192, H230, C233, C258, and C264. Residues C273, C292, and C295 each contribute to the [3Fe-4S] cluster site.

The protein belongs to the [NiFe]/[NiFeSe] hydrogenase small subunit family. In terms of assembly, heterodimer of a large and a small subunit. The cofactor is [4Fe-4S] cluster. It depends on [3Fe-4S] cluster as a cofactor. Post-translationally, predicted to be exported by the Tat system. The position of the signal peptide cleavage has not been experimentally proven.

The protein resides in the cell membrane. The catalysed reaction is H2 + A = AH2. In terms of biological role, this enzyme recycles the H(2) produced by nitrogenase to increase the production of ATP and to protect nitrogenase against inhibition or damage by O(2) under carbon- or phosphate-limited conditions. The polypeptide is Uptake hydrogenase small subunit (hupS) (Alcaligenes hydrogenophilus).